The primary structure comprises 363 residues: Sulfate/thiosulfate import ATP-binding protein CysA (363 aa).

In terms of domain architecture, ABC transporter spans 3 to 237 (IEINNISKYF…PATRFVLEFL (235 aa)). Position 35-42 (35-42 (GPSGSGKT)) interacts with ATP.

It belongs to the ABC transporter superfamily. Sulfate/tungstate importer (TC 3.A.1.6) family. The complex is composed of two ATP-binding proteins (CysA), two transmembrane proteins (CysT and CysW) and a solute-binding protein (CysP).

The protein resides in the cell inner membrane. It catalyses the reaction sulfate(out) + ATP + H2O = sulfate(in) + ADP + phosphate + H(+). The enzyme catalyses thiosulfate(out) + ATP + H2O = thiosulfate(in) + ADP + phosphate + H(+). Functionally, part of the ABC transporter complex CysAWTP involved in sulfate/thiosulfate import. Responsible for energy coupling to the transport system. The sequence is that of Sulfate/thiosulfate import ATP-binding protein CysA from Yersinia pestis.